The primary structure comprises 618 residues: Chaperone protein HtpG (618 aa).

The interval 1–340 (MATKHQFQTE…SEDLPLNVSR (340 aa)) is a; substrate-binding. The interval 341 to 545 (EILQQNKILA…KEDNNPMMAN (205 aa)) is b. Residues 546–618 (LMAQMGQKVP…ELNSLLLQSL (73 aa)) are c.

This sequence belongs to the heat shock protein 90 family. In terms of assembly, homodimer.

The protein resides in the cytoplasm. Molecular chaperone. Has ATPase activity. The protein is Chaperone protein HtpG of Helicobacter hepaticus (strain ATCC 51449 / 3B1).